Consider the following 908-residue polypeptide: DNA mismatch repair protein MutS (908 aa).

662-669 (GPNMGGKS) lines the ATP pocket.

The protein belongs to the DNA mismatch repair MutS family.

In terms of biological role, this protein is involved in the repair of mismatches in DNA. It is possible that it carries out the mismatch recognition step. This protein has a weak ATPase activity. The protein is DNA mismatch repair protein MutS of Rhizobium etli (strain ATCC 51251 / DSM 11541 / JCM 21823 / NBRC 15573 / CFN 42).